Reading from the N-terminus, the 178-residue chain is Cytochrome b6-f complex iron-sulfur subunit 1 (178 aa).

A helical transmembrane segment spans residues 17-36; the sequence is LLNFLAGTTVAVTASAGAYA. In terms of domain architecture, Rieske spans 61-161; it reads GNPIPASQIL…VAVVDDQIFI (101 aa). [2Fe-2S] cluster contacts are provided by Cys-107, His-109, Cys-125, and His-128. Cysteines 112 and 127 form a disulfide.

This sequence belongs to the Rieske iron-sulfur protein family. In terms of assembly, the 4 large subunits of the cytochrome b6-f complex are cytochrome b6, subunit IV (17 kDa polypeptide, PetD), cytochrome f and the Rieske protein, while the 4 small subunits are PetG, PetL, PetM and PetN. The complex functions as a dimer. It depends on [2Fe-2S] cluster as a cofactor.

The protein localises to the cellular thylakoid membrane. The enzyme catalyses 2 oxidized [plastocyanin] + a plastoquinol + 2 H(+)(in) = 2 reduced [plastocyanin] + a plastoquinone + 4 H(+)(out). Component of the cytochrome b6-f complex, which mediates electron transfer between photosystem II (PSII) and photosystem I (PSI), cyclic electron flow around PSI, and state transitions. The protein is Cytochrome b6-f complex iron-sulfur subunit 1 of Synechocystis sp. (strain ATCC 27184 / PCC 6803 / Kazusa).